The primary structure comprises 123 residues: Fluoride-specific ion channel FluC (123 aa).

4 helical membrane passes run 4–24 (VYIA…SGWV), 31–51 (ALPY…GLLM), 64–83 (IRMG…STFS), and 100–120 (ANIL…IFLA). The Na(+) site is built by Gly-74 and Thr-77.

It belongs to the fluoride channel Fluc/FEX (TC 1.A.43) family.

The protein localises to the cell inner membrane. It catalyses the reaction fluoride(in) = fluoride(out). Na(+) is not transported, but it plays an essential structural role and its presence is essential for fluoride channel function. In terms of biological role, fluoride-specific ion channel. Important for reducing fluoride concentration in the cell, thus reducing its toxicity. The sequence is that of Fluoride-specific ion channel FluC from Syntrophotalea carbinolica (strain DSM 2380 / NBRC 103641 / GraBd1) (Pelobacter carbinolicus).